The chain runs to 202 residues: NADH dehydrogenase [ubiquinone] iron-sulfur protein 7, mitochondrial (202 aa).

Residues 1–56 (MLRRTSFNFTGRAMISRGSPEWSHRLDLKKGKKTTMMHKLGTSKPNNALQYAQMTL) constitute a mitochondrion transit peptide. [4Fe-4S] cluster is bound by residues Cys77, Cys78, Cys142, and Cys172.

It belongs to the complex I 20 kDa subunit family. In terms of assembly, complex I is composed of 45 different subunits This is a component of the iron-sulfur (IP) fragment of the enzyme. It depends on [4Fe-4S] cluster as a cofactor.

It localises to the mitochondrion. The catalysed reaction is a ubiquinone + NADH + 5 H(+)(in) = a ubiquinol + NAD(+) + 4 H(+)(out). Its function is as follows. Core subunit of the mitochondrial membrane respiratory chain NADH dehydrogenase (Complex I) that is believed to belong to the minimal assembly required for catalysis. Complex I functions in the transfer of electrons from NADH to the respiratory chain. The immediate electron acceptor for the enzyme is believed to be ubiquinone. The protein is NADH dehydrogenase [ubiquinone] iron-sulfur protein 7, mitochondrial (NDHK) of Trypanosoma brucei brucei.